Consider the following 593-residue polypeptide: Pyruvate decarboxylase 1 (593 aa).

A compositionally biased stretch (polar residues) spans Met1 to Pro19. Positions Met1–Ser20 are disordered. Residues Asp55 and His142 each coordinate substrate. Residues Asp420–Ile502 form a thiamine pyrophosphate binding region. Mg(2+)-binding residues include Asp470, Asn497, and Gly499. Glu503 is a binding site for substrate.

Belongs to the TPP enzyme family. Homotetramer. A metal cation serves as cofactor. It depends on thiamine diphosphate as a cofactor.

It carries out the reaction a 2-oxocarboxylate + H(+) = an aldehyde + CO2. In Pisum sativum (Garden pea), this protein is Pyruvate decarboxylase 1 (PDC1).